Reading from the N-terminus, the 635-residue chain is Ligand-gated ion channel 4 (635 aa).

The first 24 residues, 1–24 (MIICYSCLTVSILLTIKFVPCRFA), serve as a signal peptide directing secretion. Residues 25–324 (GIEHQNTKSR…IHMHRRPLFY (300 aa)) lie on the Extracellular side of the membrane. N-linked (GlcNAc...) asparagine glycosylation is found at Asn46, Asn139, Asn177, and Asn225. A disulfide bridge connects residues Cys238 and Cys252. A glycan (N-linked (GlcNAc...) asparagine) is linked at Asn282. The next 3 helical transmembrane spans lie at 325 to 345 (VFNHIVPCVLISSMAVLGFLM), 355 to 375 (MIITTLLSMGVYLQSITESIP), and 381 to 401 (VPLIGMYYVSSLLMVCLATCV). At 402–599 (NVITLNMHRN…QQLASVVDRL (198 aa)) the chain is on the cytoplasmic side. A helical membrane pass occupies residues 600–620 (LLCLFCTATLFTIICLLIVPV). N-linked (GlcNAc...) asparagine glycosylation occurs at Asn625.

The protein belongs to the ligand-gated ion channel (TC 1.A.9) family.

The protein resides in the postsynaptic cell membrane. It localises to the cell membrane. Functionally, possible acetylcholine receptor. The protein is Ligand-gated ion channel 4 (lgc-4) of Caenorhabditis elegans.